Reading from the N-terminus, the 439-residue chain is Glutamate-1-semialdehyde 2,1-aminomutase (439 aa).

K273 is subject to N6-(pyridoxal phosphate)lysine.

It belongs to the class-III pyridoxal-phosphate-dependent aminotransferase family. HemL subfamily. Homodimer. Pyridoxal 5'-phosphate serves as cofactor.

It is found in the cytoplasm. It carries out the reaction (S)-4-amino-5-oxopentanoate = 5-aminolevulinate. Its pathway is porphyrin-containing compound metabolism; protoporphyrin-IX biosynthesis; 5-aminolevulinate from L-glutamyl-tRNA(Glu): step 2/2. The protein is Glutamate-1-semialdehyde 2,1-aminomutase of Paenarthrobacter aurescens (strain TC1).